The sequence spans 202 residues: NADH:(hydroxy)cinnamate reductase subunit CrdA (202 aa).

This sequence belongs to the NADH-dependent flavin reductase family. As to quaternary structure, NADH:(hydroxy)cinnamate reductase Crd is a heterodimer composed of CrdA and CrdB subunits, encoded by adjacent genes. FMN serves as cofactor.

Functionally, component of the NADH:(hydroxy)cinnamate reductase. CrdA is probably reduced by NADH and then transfers the electrons to the catalytic center of CrdB. Is likely involved in protecting V.ruber from (hydroxy)cinnamate poisoning. The sequence is that of NADH:(hydroxy)cinnamate reductase subunit CrdA from Vibrio ruber (strain DSM 16370 / JCM 11486 / BCRC 17186 / CECT 7878 / LMG 23124 / VR1).